The chain runs to 404 residues: Cysteine desulfurase IscS (404 aa).

Residues 75 to 76 (AT), Asn155, Gln183, and 203 to 205 (SAH) each bind pyridoxal 5'-phosphate. Residue Lys206 is modified to N6-(pyridoxal phosphate)lysine. Thr243 is a pyridoxal 5'-phosphate binding site. Cys328 serves as the catalytic Cysteine persulfide intermediate. Cys328 serves as a coordination point for [2Fe-2S] cluster.

Belongs to the class-V pyridoxal-phosphate-dependent aminotransferase family. NifS/IscS subfamily. Homodimer. Forms a heterotetramer with IscU, interacts with other sulfur acceptors. It depends on pyridoxal 5'-phosphate as a cofactor.

It localises to the cytoplasm. The enzyme catalyses (sulfur carrier)-H + L-cysteine = (sulfur carrier)-SH + L-alanine. It participates in cofactor biosynthesis; iron-sulfur cluster biosynthesis. Its function is as follows. Master enzyme that delivers sulfur to a number of partners involved in Fe-S cluster assembly, tRNA modification or cofactor biosynthesis. Catalyzes the removal of elemental sulfur atoms from cysteine to produce alanine. Functions as a sulfur delivery protein for Fe-S cluster synthesis onto IscU, an Fe-S scaffold assembly protein, as well as other S acceptor proteins. The polypeptide is Cysteine desulfurase IscS (Neisseria meningitidis serogroup A / serotype 4A (strain DSM 15465 / Z2491)).